Reading from the N-terminus, the 984-residue chain is Ephrin type-A receptor 3 (984 aa).

The N-terminal stretch at 1–20 is a signal peptide; it reads MDCHLSILILFGCCVLSCSR. Residues 21–541 lie on the Extracellular side of the membrane; sequence ELSPQPSNEV…SFSISGENSH (521 aa). Positions 29 to 207 constitute an Eph LBD domain; the sequence is EVNLLDSKTI…YFKKCPFTVK (179 aa). N232, N337, N391, N404, and N493 each carry an N-linked (GlcNAc...) asparagine glycan. 2 consecutive Fibronectin type-III domains span residues 325–435 and 436–532; these read PPSA…TNQA and APSP…SPDS. A helical transmembrane segment spans residues 542–565; the sequence is VVMIAISAAVAIIVLTVVTYVLVG. The Cytoplasmic segment spans residues 566 to 984; it reads RFCGYHKSKH…TQSKNGPVPV (419 aa). Y597 and Y603 each carry phosphotyrosine; by autocatalysis. Positions 622-883 constitute a Protein kinase domain; that stretch reads IAIDKVVGAG…QIVSILDKLI (262 aa). ATP is bound by residues 629–634, K654, and 701–707; these read GAGEFG and EYMENGS. At Y702 the chain carries Phosphotyrosine; by autocatalysis. The Proton acceptor role is filled by D747. An ATP-binding site is contributed by 751-752; that stretch reads RN. At Y780 the chain carries Phosphotyrosine; by autocatalysis. Residues 912 to 976 form the SAM domain; that stretch reads ATFHTTGDWL…ISSIKALETQ (65 aa). The residue at position 938 (Y938) is a Phosphotyrosine. The PDZ-binding motif lies at 982 to 984; that stretch reads VPV.

This sequence belongs to the protein kinase superfamily. Tyr protein kinase family. Ephrin receptor subfamily. As to quaternary structure, heterotetramer upon binding of the ligand. The heterotetramer is composed of an ephrin dimer and a receptor dimer. Oligomerization is probably required to induce biological responses. Forms a ternary EFNA5-EPHA3-ADAM10 complex mediating EFNA5 extracellular domain shedding by ADAM10 which regulates the EFNA5-EPHA3 complex internalization and function. Interacts (phosphorylated) with PTPN1; dephosphorylates EPHA3 and may regulate its trafficking and function. Interacts (phosphorylated) with CRK; mediates EFNA5-EPHA3 signaling through RHOA GTPase activation. Interacts with NCK1 (via SH2 domain); mediates EFNA5-EPHA3 signaling. In terms of processing, autophosphorylates upon activation by EFNA5. Phosphorylation on Tyr-603 mediates interaction with NCK1. Dephosphorylated by PTPN1. In terms of tissue distribution, most abundant in the heart, brain and lung.

It localises to the cell membrane. It carries out the reaction L-tyrosyl-[protein] + ATP = O-phospho-L-tyrosyl-[protein] + ADP + H(+). Functionally, receptor tyrosine kinase which binds promiscuously membrane-bound ephrin family ligands residing on adjacent cells, leading to contact-dependent bidirectional signaling into neighboring cells. The signaling pathway downstream of the receptor is referred to as forward signaling while the signaling pathway downstream of the ephrin ligand is referred to as reverse signaling. Highly promiscuous for ephrin-A ligands it binds preferentially EFNA5. Upon activation by EFNA5 regulates cell-cell adhesion, cytoskeletal organization and cell migration. Plays a role in cardiac cells migration and differentiation and regulates the formation of the atrioventricular canal and septum during development probably through activation by EFNA1. Involved in the retinotectal mapping of neurons. May also control the segregation but not the guidance of motor and sensory axons during neuromuscular circuit development. The protein is Ephrin type-A receptor 3 (Epha3) of Rattus norvegicus (Rat).